Here is an 896-residue protein sequence, read N- to C-terminus: Microsomal triglyceride transfer protein large subunit (896 aa).

An N-terminal signal peptide occupies residues 1–21 (MILLAVLFLCFFSSYSASVKG). The Vitellogenin domain maps to 28-659 (LNNERLYKLT…IFQYIGKAEL (632 aa)). C174 and C194 form a disulfide bridge.

Heterodimer; heterodimerizes with the protein disulfide isomerase (P4HB/PDI). Interacts with APOB. Interacts with PRAP1.

Its subcellular location is the endoplasmic reticulum. The protein localises to the golgi apparatus. The catalysed reaction is a 1,2-diacyl-sn-glycero-3-phosphocholine(in) = a 1,2-diacyl-sn-glycero-3-phosphocholine(out). The enzyme catalyses a 1,2-diacyl-sn-glycero-3-phosphoethanolamine(in) = a 1,2-diacyl-sn-glycero-3-phosphoethanolamine(out). It catalyses the reaction a cholesterol ester(in) = a cholesterol ester(out). It carries out the reaction a triacyl-sn-glycerol(in) = a triacyl-sn-glycerol(out). Its function is as follows. Catalyzes the transport of triglyceride, cholesteryl ester, and phospholipid between phospholipid surfaces. Required for the assembly and secretion of plasma lipoproteins that contain apolipoprotein B. May be involved in regulating cholesteryl ester biosynthesis in cells that produce lipoproteins. The chain is Microsomal triglyceride transfer protein large subunit (Mttp) from Rattus norvegicus (Rat).